A 314-amino-acid chain; its full sequence is tRNA pseudouridine synthase B (314 aa).

D41 (nucleophile) is an active-site residue.

This sequence belongs to the pseudouridine synthase TruB family. Type 1 subfamily.

The catalysed reaction is uridine(55) in tRNA = pseudouridine(55) in tRNA. Functionally, responsible for synthesis of pseudouridine from uracil-55 in the psi GC loop of transfer RNAs. This Prochlorococcus marinus (strain NATL2A) protein is tRNA pseudouridine synthase B.